The chain runs to 570 residues: Adenine deaminase (570 aa).

Belongs to the metallo-dependent hydrolases superfamily. Adenine deaminase family. The cofactor is Mn(2+).

It catalyses the reaction adenine + H2O + H(+) = hypoxanthine + NH4(+). The polypeptide is Adenine deaminase (Petrotoga mobilis (strain DSM 10674 / SJ95)).